A 38-amino-acid chain; its full sequence is Large ribosomal subunit protein bL36 (38 aa).

The protein belongs to the bacterial ribosomal protein bL36 family.

This is Large ribosomal subunit protein bL36 from Lactobacillus acidophilus (strain ATCC 700396 / NCK56 / N2 / NCFM).